The sequence spans 449 residues: MNAALSQWKDAHAARLRDYSAVRVSGRVSAVRGILLECKIPAAKVGDLCEVSKADGSFLLAEIVGFTQECTLLSALGAPDGIQVGAPIRPLGIAHRIGVDDSLLGCVLDGFGRPLLGDCLGAFAGPDDRRETLPVIADALPPTQRPRITNALPTGVRAIDSAILLGEGQRVGLFAGAGCGKTTLMAELARNMGCDVIVFGLIGERGRELREFLDHELDETLRRRSVLVCATSDRSSMERARAAFTATAIAEAFRARGQKVLLLLDSLTRFARAQREIGIASGEPLGRGGLPPSVYTLLPRLVERAGMSENGSITALYTVLIEQDSMNDPVADEVRSLLDGHIVLSRKLAERGHYPAIDVSASISRILSNVTGREHQRANNRLRQLLAAYKQVEMLLRLGEYQAGADPVTDCAVQLNDDINEFLRQDLREPVPLQETLDGLLRLTSRLPE.

G178–T183 lines the ATP pocket.

This sequence belongs to the ATPase alpha/beta chains family. T3SS ATPase subfamily. As to quaternary structure, the core secretion machinery of the T3SS is composed of approximately 20 different proteins, including cytoplasmic components, a base, an export apparatus and a needle. This subunit is part of the cytosolic complex. Forms homododecamers. Comprises two hexameric rings that are probably stacked face-to-face by the association of their C-terminal domains. Also present as monomer and homohexamer in solution.

It localises to the cytoplasm. The catalysed reaction is ATP + H2O + cellular proteinSide 1 = ADP + phosphate + cellular proteinSide 2.. Oligomerization increases ATPase activity. ATPase component of the type III secretion system (T3SS), also called injectisome, which is used to inject bacterial effector proteins into eukaryotic host cells. Acts as a molecular motor to provide the energy that is required for the export of proteins. Required for type III secretion apparatus (T3SA) formation, proper protein secretion, host cell invasion and virulence. May play a critical role in T3SS substrate recognition, disassembly of the effector/chaperone complex and unfolding of the effector in an ATP-dependent manner prior to secretion. The protein is Type 3 secretion system ATPase of Pseudomonas savastanoi pv. phaseolicola (Pseudomonas syringae pv. phaseolicola).